Reading from the N-terminus, the 498-residue chain is ATP synthase subunit beta, chloroplastic (498 aa).

172–179 (GGAGVGKT) is a binding site for ATP.

This sequence belongs to the ATPase alpha/beta chains family. In terms of assembly, F-type ATPases have 2 components, CF(1) - the catalytic core - and CF(0) - the membrane proton channel. CF(1) has five subunits: alpha(3), beta(3), gamma(1), delta(1), epsilon(1). CF(0) has four main subunits: a(1), b(1), b'(1) and c(9-12).

The protein localises to the plastid. The protein resides in the chloroplast thylakoid membrane. The enzyme catalyses ATP + H2O + 4 H(+)(in) = ADP + phosphate + 5 H(+)(out). In terms of biological role, produces ATP from ADP in the presence of a proton gradient across the membrane. The catalytic sites are hosted primarily by the beta subunits. In Phaseolus vulgaris (Kidney bean), this protein is ATP synthase subunit beta, chloroplastic.